A 214-amino-acid polypeptide reads, in one-letter code: 3-isopropylmalate dehydratase small subunit (214 aa).

Belongs to the LeuD family. LeuD type 1 subfamily. As to quaternary structure, heterodimer of LeuC and LeuD.

It carries out the reaction (2R,3S)-3-isopropylmalate = (2S)-2-isopropylmalate. Its pathway is amino-acid biosynthesis; L-leucine biosynthesis; L-leucine from 3-methyl-2-oxobutanoate: step 2/4. Its function is as follows. Catalyzes the isomerization between 2-isopropylmalate and 3-isopropylmalate, via the formation of 2-isopropylmaleate. The polypeptide is 3-isopropylmalate dehydratase small subunit (Nitrosococcus oceani (strain ATCC 19707 / BCRC 17464 / JCM 30415 / NCIMB 11848 / C-107)).